A 338-amino-acid polypeptide reads, in one-letter code: Glycerol-3-phosphate dehydrogenase [NAD(P)+] (338 aa).

The NADPH site is built by S14, Y15, H35, and K109. The sn-glycerol 3-phosphate site is built by K109, G138, and T140. Residue A142 participates in NADPH binding. 5 residues coordinate sn-glycerol 3-phosphate: K194, D247, S257, R258, and N259. K194 acts as the Proton acceptor in catalysis. NADPH is bound at residue R258. 2 residues coordinate NADPH: V282 and E284.

Belongs to the NAD-dependent glycerol-3-phosphate dehydrogenase family.

The protein localises to the cytoplasm. It carries out the reaction sn-glycerol 3-phosphate + NAD(+) = dihydroxyacetone phosphate + NADH + H(+). The catalysed reaction is sn-glycerol 3-phosphate + NADP(+) = dihydroxyacetone phosphate + NADPH + H(+). The protein operates within membrane lipid metabolism; glycerophospholipid metabolism. Catalyzes the reduction of the glycolytic intermediate dihydroxyacetone phosphate (DHAP) to sn-glycerol 3-phosphate (G3P), the key precursor for phospholipid synthesis. The protein is Glycerol-3-phosphate dehydrogenase [NAD(P)+] of Shewanella oneidensis (strain ATCC 700550 / JCM 31522 / CIP 106686 / LMG 19005 / NCIMB 14063 / MR-1).